We begin with the raw amino-acid sequence, 953 residues long: Pyruvate, phosphate dikinase, chloroplastic (953 aa).

The transit peptide at 1–77 (MMSSLSVEGM…VLNPVSPPVT (77 aa)) directs the protein to the chloroplast. The tract at residues 55–74 (PELRSSGLTPPRAVLNPVSP) is disordered. Thr-533 carries the phosphothreonine; by PDRP1 modification. His-535 serves as the catalytic Tele-phosphohistidine intermediate. Positions 641, 698, 827, 848, 849, 850, and 851 each coordinate substrate. Position 827 (Glu-827) interacts with Mg(2+). Position 851 (Asp-851) interacts with Mg(2+). The active-site Proton donor is the Cys-913.

It belongs to the PEP-utilizing enzyme family. As to quaternary structure, homotetramer. Requires Mg(2+) as cofactor. Phosphorylation of Thr-533 in the dark inactivates the enzyme. Dephosphorylation upon light stimulation reactivates the enzyme. Isoform 1 mainly localized in mesophyll cells and only a low level is found in bundle sheath cells. Isoform 2 is expressed in roots and stems.

It localises to the plastid. The protein resides in the chloroplast. The protein localises to the cytoplasm. The enzyme catalyses pyruvate + phosphate + ATP = phosphoenolpyruvate + AMP + diphosphate + H(+). The protein operates within photosynthesis; C4 acid pathway. Activated by light-induced dephosphorylation. Inhibited by dark-induced phosphorylation. Both reactions are catalyzed by PDRP1. Its function is as follows. Formation of phosphoenolpyruvate, which is the primary acceptor of CO(2) in C4 and some Crassulacean acid metabolism plants. The protein is Pyruvate, phosphate dikinase, chloroplastic (PPDK) of Flaveria trinervia (Clustered yellowtops).